Here is a 292-residue protein sequence, read N- to C-terminus: 33 kDa chaperonin (292 aa).

Intrachain disulfides connect C230-C232 and C263-C266.

It belongs to the HSP33 family. Under oxidizing conditions two disulfide bonds are formed involving the reactive cysteines. Under reducing conditions zinc is bound to the reactive cysteines and the protein is inactive.

It localises to the cytoplasm. In terms of biological role, redox regulated molecular chaperone. Protects both thermally unfolding and oxidatively damaged proteins from irreversible aggregation. Plays an important role in the bacterial defense system toward oxidative stress. This chain is 33 kDa chaperonin, found in Salmonella paratyphi A (strain ATCC 9150 / SARB42).